A 298-amino-acid chain; its full sequence is GTPase Era (298 aa).

Residues 3 to 170 form the Era-type G domain; sequence KSGFVAILGR…VQLLKDNLEE (168 aa). Residues 11 to 18 are G1; sequence GRPNVGKS. 11 to 18 contributes to the GTP binding site; sequence GRPNVGKS. The segment at 37 to 41 is G2; it reads QTTRN. The segment at 58-61 is G3; sequence DTPG. Residues 58–62 and 120–123 contribute to the GTP site; these read DTPGI and NKID. The tract at residues 120-123 is G4; sequence NKID. The tract at residues 149 to 151 is G5; sequence ISA. The KH type-2 domain occupies 201–279; that stretch reads TQQEVPHSVA…YLETWVKVKK (79 aa).

The protein belongs to the TRAFAC class TrmE-Era-EngA-EngB-Septin-like GTPase superfamily. Era GTPase family. Monomer.

The protein localises to the cytoplasm. It localises to the cell membrane. Functionally, an essential GTPase that binds both GDP and GTP, with rapid nucleotide exchange. Plays a role in 16S rRNA processing and 30S ribosomal subunit biogenesis and possibly also in cell cycle regulation and energy metabolism. In Streptococcus equi subsp. zooepidemicus (strain MGCS10565), this protein is GTPase Era.